A 173-amino-acid chain; its full sequence is U1 small nuclear ribonucleoprotein C (173 aa).

The segment at 4 to 36 (YYCDYCDTYLTHDSPSVRKTHCQGRKHKDNVKF) adopts a Matrin-type zinc-finger fold. The interval 72–100 (AAIPPPANMQGPPRPVPPGPMGPGPNMLG) is disordered. Over residues 73-94 (AIPPPANMQGPPRPVPPGPMGP) the composition is skewed to pro residues.

The protein belongs to the U1 small nuclear ribonucleoprotein C family. As to quaternary structure, U1 snRNP is composed of the 7 core Sm proteins B/B', D1, D2, D3, E, F and G that assemble in a heptameric protein ring on the Sm site of the small nuclear RNA to form the core snRNP, and at least 3 U1 snRNP-specific proteins U1-70K, U1-A and U1-C. U1-C interacts with U1 snRNA and the 5' splice-site region of the pre-mRNA.

The protein localises to the nucleus. Its function is as follows. Component of the spliceosomal U1 snRNP, which is essential for recognition of the pre-mRNA 5' splice-site and the subsequent assembly of the spliceosome. U1-C is directly involved in initial 5' splice-site recognition for both constitutive and regulated alternative splicing. The interaction with the 5' splice-site seems to precede base-pairing between the pre-mRNA and the U1 snRNA. Stimulates commitment or early (E) complex formation by stabilizing the base pairing of the 5' end of the U1 snRNA and the 5' splice-site region. This Pediculus humanus subsp. corporis (Body louse) protein is U1 small nuclear ribonucleoprotein C.